Consider the following 78-residue polypeptide: Putative membrane protein insertion efficiency factor (78 aa).

This sequence belongs to the UPF0161 family.

The protein localises to the cell inner membrane. In terms of biological role, could be involved in insertion of integral membrane proteins into the membrane. This Prochlorococcus marinus (strain MIT 9312) protein is Putative membrane protein insertion efficiency factor.